The following is a 179-amino-acid chain: MYEYLDRRYALALYEVAEENNKVDEYLKDLKEVVNIIKNSEDICKILKHPEINTSRKKEIFTELFKDKVDDKILSFLLVLIEKDRILYLEEKLKEMEKIYLEKNNMILANVKTVIPLLKEEREELIEKLGNKYNKKIILEEEIDKSIIGGVYVRVGDDVLDGTLSTRLKDIKKMMLKRE.

Belongs to the ATPase delta chain family. In terms of assembly, F-type ATPases have 2 components, F(1) - the catalytic core - and F(0) - the membrane proton channel. F(1) has five subunits: alpha(3), beta(3), gamma(1), delta(1), epsilon(1). F(0) has three main subunits: a(1), b(2) and c(10-14). The alpha and beta chains form an alternating ring which encloses part of the gamma chain. F(1) is attached to F(0) by a central stalk formed by the gamma and epsilon chains, while a peripheral stalk is formed by the delta and b chains.

It is found in the cell membrane. Functionally, f(1)F(0) ATP synthase produces ATP from ADP in the presence of a proton or sodium gradient. F-type ATPases consist of two structural domains, F(1) containing the extramembraneous catalytic core and F(0) containing the membrane proton channel, linked together by a central stalk and a peripheral stalk. During catalysis, ATP synthesis in the catalytic domain of F(1) is coupled via a rotary mechanism of the central stalk subunits to proton translocation. Its function is as follows. This protein is part of the stalk that links CF(0) to CF(1). It either transmits conformational changes from CF(0) to CF(1) or is implicated in proton conduction. The polypeptide is ATP synthase subunit delta (Clostridium botulinum (strain 657 / Type Ba4)).